The following is a 375-amino-acid chain: Alcohol dehydrogenase 1A (375 aa).

At Ser-2 the chain carries N-acetylserine. A Phosphoserine modification is found at Ser-23. Residue Cys-47 participates in Zn(2+) binding. 48–52 (GTDDH) is a binding site for NAD(+). Zn(2+) is bound by residues His-68, Cys-98, Cys-101, Cys-104, Cys-112, and Cys-175. NAD(+) is bound by residues 200–205 (GLGGVG), Asp-224, Lys-229, Ile-270, 293–295 (VGV), 318–320 (AIL), and Arg-370.

It belongs to the zinc-containing alcohol dehydrogenase family. As to quaternary structure, dimer of identical or heterodimer of closely related subunits alpha, beta, or gamma that are encoded by genes ADH1A, ADH1B, and ADH1C, respectively. Zn(2+) is required as a cofactor.

Its subcellular location is the cytoplasm. It carries out the reaction a primary alcohol + NAD(+) = an aldehyde + NADH + H(+). The enzyme catalyses a secondary alcohol + NAD(+) = a ketone + NADH + H(+). The catalysed reaction is butan-1-ol + NAD(+) = butanal + NADH + H(+). It catalyses the reaction 1-propanol + NAD(+) = propanal + NADH + H(+). Functionally, alcohol dehydrogenase. Oxidizes primary as well as secondary alcohols. Ethanol is a very poor substrate. In Homo sapiens (Human), this protein is Alcohol dehydrogenase 1A (ADH1A).